Consider the following 689-residue polypeptide: Glycine--tRNA ligase beta subunit (689 aa).

The protein belongs to the class-II aminoacyl-tRNA synthetase family. In terms of assembly, tetramer of two alpha and two beta subunits.

It localises to the cytoplasm. The enzyme catalyses tRNA(Gly) + glycine + ATP = glycyl-tRNA(Gly) + AMP + diphosphate. In Hamiltonella defensa subsp. Acyrthosiphon pisum (strain 5AT), this protein is Glycine--tRNA ligase beta subunit.